Consider the following 43-residue polypeptide: Subtilosin-A (43 aa).

The propeptide occupies 1–8 (MKKAVIVE). The segment at residues 9-43 (NKGCATCSIGAACLVDGPIPDFEIAGATGLFGLWG) is a cross-link (cyclopeptide (Asn-Gly)). Residues 12-39 (CATCSIGAACLVDGPIPDFEIAGATGLF) constitute a cross-link (2-cysteinyl-D-phenylalanine (Cys-Phe)). The 2-cysteinyl-D-allo-threonine (Cys-Thr) cross-link spans 15-36 (CSIGAACLVDGPIPDFEIAGAT). Residues 21–30 (CLVDGPIPDF) constitute a cross-link (2-cysteinyl-L-phenylalanine (Cys-Phe)).

The protein belongs to the bacteriocin class V family. This sactipeptide undergoes unique processing steps that include proteolytic cleavage after Glu-8, and covalent linkage of the alpha-amino of Asn-9 with the carboxyl of Gly-43 to form a cyclopeptide. Thioether cross-links are formed between cysteines and the alpha-carbons of other amino acids, Cys-12 to Phe-39, Cys-15 to Thr-36, and Cys-21 to Phe-30. In forming these cross-links, Thr-36 and Phe-39 are converted to D-amino acids. Propeptide cleavage and cyclopeptide formation only occur after all 3 thioether cross-links are formed.

Its subcellular location is the secreted. Its function is as follows. Has bacteriocidal activity against some Gram-positive bacteria such as Listeria, some species of Bacillus and E.faecium. A single mutation (Thr-14-Ile) confers hemolytic activity against rabbit and human blood. The sequence is that of Subtilosin-A (sboA) from Bacillus subtilis (strain 168).